Consider the following 434-residue polypeptide: Histidinol dehydrogenase (434 aa).

The NAD(+) site is built by Tyr-130, Gln-191, and Asn-214. 3 residues coordinate substrate: Ser-237, Gln-259, and His-262. Residues Gln-259 and His-262 each coordinate Zn(2+). Residues Glu-327 and His-328 each act as proton acceptor in the active site. Substrate-binding residues include His-328, Asp-361, Glu-415, and His-420. Asp-361 contributes to the Zn(2+) binding site. Residue His-420 participates in Zn(2+) binding.

It belongs to the histidinol dehydrogenase family. The cofactor is Zn(2+).

The catalysed reaction is L-histidinol + 2 NAD(+) + H2O = L-histidine + 2 NADH + 3 H(+). It participates in amino-acid biosynthesis; L-histidine biosynthesis; L-histidine from 5-phospho-alpha-D-ribose 1-diphosphate: step 9/9. Catalyzes the sequential NAD-dependent oxidations of L-histidinol to L-histidinaldehyde and then to L-histidine. The chain is Histidinol dehydrogenase from Rhizobium meliloti (strain 1021) (Ensifer meliloti).